Here is a 163-residue protein sequence, read N- to C-terminus: MFRRLIGVVVATVLLTFQLIVGSATALELDEATRTVPLNAQGDTVTLSLKQVKEGKRLFQYACAQCHVGGVTKTNQNVGLEPEALALATPNRNNIEGLVDYMKNPTTYDGVEEISEIHPSIKSADIFTAMRNLTDKDLESIAGHILLQPKILGDKWGGGKIYY.

The N-terminal stretch at 1–26 is a signal peptide; the sequence is MFRRLIGVVVATVLLTFQLIVGSATA. Residues cysteine 63, cysteine 66, histidine 67, and histidine 118 each contribute to the heme c site.

The protein belongs to the cytochrome c family. PsbV subfamily. PSII is composed of 1 copy each of membrane proteins PsbA, PsbB, PsbC, PsbD, PsbE, PsbF, PsbH, PsbI, PsbJ, PsbK, PsbL, PsbM, PsbT, PsbX, PsbY, PsbZ, Psb30/Ycf12, peripheral proteins PsbO, CyanoQ (PsbQ), PsbU, PsbV and a large number of cofactors. It forms dimeric complexes. Heme c serves as cofactor.

Its subcellular location is the cellular thylakoid membrane. Functionally, one of the extrinsic, lumenal subunits of photosystem II (PSII). PSII is a light-driven water plastoquinone oxidoreductase, using light energy to abstract electrons from H(2)O, generating a proton gradient subsequently used for ATP formation. The extrinsic proteins stabilize the structure of photosystem II oxygen-evolving complex (OEC), the ion environment of oxygen evolution and protect the OEC against heat-induced inactivation. Low-potential cytochrome c that plays a role in the OEC of PSII. This chain is Photosystem II extrinsic protein V, found in Trichormus variabilis (strain ATCC 29413 / PCC 7937) (Anabaena variabilis).